The primary structure comprises 556 residues: 2-succinyl-5-enolpyruvyl-6-hydroxy-3-cyclohexene-1-carboxylate synthase (556 aa).

Belongs to the TPP enzyme family. MenD subfamily. Homodimer. The cofactor is Mg(2+). Mn(2+) serves as cofactor. Requires thiamine diphosphate as cofactor.

The catalysed reaction is isochorismate + 2-oxoglutarate + H(+) = 5-enolpyruvoyl-6-hydroxy-2-succinyl-cyclohex-3-ene-1-carboxylate + CO2. It functions in the pathway quinol/quinone metabolism; 1,4-dihydroxy-2-naphthoate biosynthesis; 1,4-dihydroxy-2-naphthoate from chorismate: step 2/7. The protein operates within quinol/quinone metabolism; menaquinone biosynthesis. Catalyzes the thiamine diphosphate-dependent decarboxylation of 2-oxoglutarate and the subsequent addition of the resulting succinic semialdehyde-thiamine pyrophosphate anion to isochorismate to yield 2-succinyl-5-enolpyruvyl-6-hydroxy-3-cyclohexene-1-carboxylate (SEPHCHC). This chain is 2-succinyl-5-enolpyruvyl-6-hydroxy-3-cyclohexene-1-carboxylate synthase, found in Shigella boydii serotype 18 (strain CDC 3083-94 / BS512).